A 273-amino-acid polypeptide reads, in one-letter code: Eukaryotic translation initiation factor 3 subunit G-2 (273 aa).

Residues 165–193 (KYVPPFMKDGGGGPGGKNWGRGRERDDSS) are disordered. The segment covering 173 to 183 (DGGGGPGGKNW) has biased composition (gly residues). Residues 193 to 271 (SAVRISNLSE…LILCVEWSKP (79 aa)) form the RRM domain.

The protein belongs to the eIF-3 subunit G family. As to quaternary structure, component of the eukaryotic translation initiation factor 3 (eIF-3) complex. The eIF-3 complex interacts with pix.

The protein localises to the cytoplasm. RNA-binding component of the eukaryotic translation initiation factor 3 (eIF-3) complex, which is involved in protein synthesis of a specialized repertoire of mRNAs and, together with other initiation factors, stimulates binding of mRNA and methionyl-tRNAi to the 40S ribosome. The eIF-3 complex specifically targets and initiates translation of a subset of mRNAs involved in cell proliferation. This subunit can bind 18S rRNA. This is Eukaryotic translation initiation factor 3 subunit G-2 from Drosophila yakuba (Fruit fly).